A 375-amino-acid chain; its full sequence is Aminomethyltransferase (375 aa).

This sequence belongs to the GcvT family. As to quaternary structure, the glycine cleavage system is composed of four proteins: P, T, L and H.

It catalyses the reaction N(6)-[(R)-S(8)-aminomethyldihydrolipoyl]-L-lysyl-[protein] + (6S)-5,6,7,8-tetrahydrofolate = N(6)-[(R)-dihydrolipoyl]-L-lysyl-[protein] + (6R)-5,10-methylene-5,6,7,8-tetrahydrofolate + NH4(+). In terms of biological role, the glycine cleavage system catalyzes the degradation of glycine. The chain is Aminomethyltransferase from Ralstonia pickettii (strain 12J).